Consider the following 223-residue polypeptide: Large ribosomal subunit protein uL4 (223 aa).

The disordered stretch occupies residues 47-72 (GTASTKTRGEVAGGGRKPWPQKHTGR).

The protein belongs to the universal ribosomal protein uL4 family. As to quaternary structure, part of the 50S ribosomal subunit.

Functionally, one of the primary rRNA binding proteins, this protein initially binds near the 5'-end of the 23S rRNA. It is important during the early stages of 50S assembly. It makes multiple contacts with different domains of the 23S rRNA in the assembled 50S subunit and ribosome. Its function is as follows. Forms part of the polypeptide exit tunnel. The chain is Large ribosomal subunit protein uL4 from Fervidobacterium nodosum (strain ATCC 35602 / DSM 5306 / Rt17-B1).